The sequence spans 689 residues: PR domain zinc finger protein 8 (689 aa).

The SET domain maps to Lys-16 to Gly-131. Tyr-130 contributes to the S-adenosyl-L-methionine binding site. The C2H2-type 1 zinc finger occupies Tyr-155–His-183. 2 disordered regions span residues Ala-185 to Arg-333 and Ser-397 to Arg-506. Gly residues predominate over residues Gln-193–Lys-210. Composition is skewed to low complexity over residues Pro-241–Ser-258 and Gly-273–Gly-286. Residues Glu-322–Arg-333 show a composition bias toward gly residues. Residues Ser-423–Ala-433 are compositionally biased toward low complexity. Positions Thr-472–Gly-491 are enriched in gly residues. C2H2-type zinc fingers lie at residues Asn-625–His-648 and Leu-666–His-688.

Belongs to the class V-like SAM-binding methyltransferase superfamily. Interacts with EPM2A and NHLRC1. This interaction sequesters EPM2A and NHLRC1 to the nucleus. Interacts with BHLHE22. Expressed in brain, heart, skeletal muscle, testes, prostate.

It localises to the nucleus. Functionally, probable histone methyltransferase, preferentially acting on 'Lys-9' of histone H3. Involved in the control of steroidogenesis through transcriptional repression of steroidogenesis marker genes such as CYP17A1 and LHCGR. Forms with BHLHE22 a transcriptional repressor complex controlling genes involved in neural development and neuronal differentiation. In the retina, it is required for rod bipolar and type 2 OFF-cone bipolar cell survival. The protein is PR domain zinc finger protein 8 (PRDM8) of Homo sapiens (Human).